The sequence spans 336 residues: Opsin-1, short-wave-sensitive 1 (336 aa).

At 1-29 (MDAWAVQFGNASKVSPFEGEQYHIAPKWA) the chain is on the extracellular side. A glycan (N-linked (GlcNAc...) asparagine) is linked at N10. Residues 30–54 (FYLQAAFMGFVFIVGTPMNGIVLFV) form a helical membrane-spanning segment. The Cytoplasmic portion of the chain corresponds to 55–66 (TMKYKKLRQPLN). Residues 67 to 91 (YILVNISLAGFIFDTFSVSQVFVCA) traverse the membrane as a helical segment. The Extracellular portion of the chain corresponds to 92 to 106 (ARGYYFLGYTLCAME). A disulfide bridge connects residues C103 and C180. A helical membrane pass occupies residues 107–126 (AAMGSIAGLVTGWSLAVLAF). Topologically, residues 127 to 145 (ERYVVICKPFGSFKFGQGQ) are cytoplasmic. Residues 146–169 (AVGAVVFTWIIGTACATPPFFGWS) traverse the membrane as a helical segment. Residues 170–195 (RYIPEGLGTACGPDWYTKSEEYNSES) lie on the Extracellular side of the membrane. The helical transmembrane segment at 196 to 223 (YTYFLLITCFMMPMTIIIFSYSQLLGAL) threads the bilayer. The Cytoplasmic segment spans residues 224–245 (RAVAAQQAESESTQKAEREVSR). A helical membrane pass occupies residues 246–269 (MVVVMVGSFVLCYAPYAVTAMYFA). The Extracellular portion of the chain corresponds to 270–277 (NSDEPNKD). A helical membrane pass occupies residues 278 to 302 (YRLVAIPAFFSKSSCVYNPLIYAFM). Position 289 is an N6-(retinylidene)lysine (K289). At 303–336 (NKQFNACIMETVFGKKIDESSEVSSKTETSSVSA) the chain is on the cytoplasmic side.

It belongs to the G-protein coupled receptor 1 family. Opsin subfamily. In terms of processing, phosphorylated on some or all of the serine and threonine residues present in the C-terminal region. In terms of tissue distribution, retinal short single cones, outer and inner segments.

Its subcellular location is the membrane. Functionally, visual pigments are the light-absorbing molecules that mediate vision. They consist of an apoprotein, opsin, covalently linked to cis-retinal. The chain is Opsin-1, short-wave-sensitive 1 (opn1sw1) from Danio rerio (Zebrafish).